Reading from the N-terminus, the 89-residue chain is Small ribosomal subunit protein uS15 (89 aa).

Belongs to the universal ribosomal protein uS15 family. In terms of assembly, part of the 30S ribosomal subunit. Forms a bridge to the 50S subunit in the 70S ribosome, contacting the 23S rRNA.

Functionally, one of the primary rRNA binding proteins, it binds directly to 16S rRNA where it helps nucleate assembly of the platform of the 30S subunit by binding and bridging several RNA helices of the 16S rRNA. In terms of biological role, forms an intersubunit bridge (bridge B4) with the 23S rRNA of the 50S subunit in the ribosome. This chain is Small ribosomal subunit protein uS15, found in Vibrio parahaemolyticus serotype O3:K6 (strain RIMD 2210633).